A 375-amino-acid polypeptide reads, in one-letter code: Actin-binding Rho-activating protein (375 aa).

Basic and acidic residues-rich tracts occupy residues 1 to 11 and 79 to 99; these read MAPGEREREAG and KPDR…SHIK. Disordered stretches follow at residues 1 to 20 and 38 to 99; these read MAPG…LRKV and NENS…SHIK. 2 positions are modified to phosphoserine: S150 and S182. Basic and acidic residues predominate over residues 173-182; it reads QEEPTWKSDS. Residues 173–204 are disordered; that stretch reads QEEPTWKSDSVDTEDSGYGGDMEERPEQDAAP. 2 actin-binding regions span residues 193–293 and 294–375; these read DMEE…AERA and KRAE…TLLE. Interaction with actin stretches follow at residues 234-279 and 346-375; these read SQVD…GDEG and MRAR…TLLE.

Binds F-actin and ABLIM1, ABLIM2 and ABLIM3. Interaction with ABLIM2 and ABLIM3 enhances activity. In terms of tissue distribution, expressed specifically in heart and skeletal muscle.

Its subcellular location is the cytoplasm. The protein resides in the myofibril. It localises to the sarcomere. It is found in the cytoskeleton. Functionally, acts as an activator of serum response factor (SRF)-dependent transcription possibly by inducing nuclear translocation of MKL1 or MKL2 and through a mechanism requiring Rho-actin signaling. The polypeptide is Actin-binding Rho-activating protein (Mus musculus (Mouse)).